The following is a 325-amino-acid chain: Acetyl-coenzyme A carboxylase carboxyl transferase subunit alpha (325 aa).

One can recognise a CoA carboxyltransferase C-terminal domain in the interval 38–292; it reads KLEKRLHALE…DQVLEKSLKQ (255 aa).

Belongs to the AccA family. As to quaternary structure, acetyl-CoA carboxylase is a heterohexamer composed of biotin carboxyl carrier protein (AccB), biotin carboxylase (AccC) and two subunits each of ACCase subunit alpha (AccA) and ACCase subunit beta (AccD).

It localises to the cytoplasm. It catalyses the reaction N(6)-carboxybiotinyl-L-lysyl-[protein] + acetyl-CoA = N(6)-biotinyl-L-lysyl-[protein] + malonyl-CoA. It participates in lipid metabolism; malonyl-CoA biosynthesis; malonyl-CoA from acetyl-CoA: step 1/1. In terms of biological role, component of the acetyl coenzyme A carboxylase (ACC) complex. First, biotin carboxylase catalyzes the carboxylation of biotin on its carrier protein (BCCP) and then the CO(2) group is transferred by the carboxyltransferase to acetyl-CoA to form malonyl-CoA. The sequence is that of Acetyl-coenzyme A carboxylase carboxyl transferase subunit alpha from Halalkalibacterium halodurans (strain ATCC BAA-125 / DSM 18197 / FERM 7344 / JCM 9153 / C-125) (Bacillus halodurans).